Here is a 559-residue protein sequence, read N- to C-terminus: Protein GRAVITROPIC IN THE LIGHT 1 (559 aa).

Positions 107–127 are disordered; that stretch reads AVNRREEYDTEEEENEEEGEI. Residues 114-127 are compositionally biased toward acidic residues; that stretch reads YDTEEEENEEEGEI.

In terms of biological role, required for red (R) and far red (FR) light-induced and phytochrome-mediated deregulation of negative gravitropism leading to randomization of hypocotyl growth orientation. The polypeptide is Protein GRAVITROPIC IN THE LIGHT 1 (Arabidopsis thaliana (Mouse-ear cress)).